The primary structure comprises 372 residues: 18-hydroxynorfluorocurarine reductase (372 aa).

Residues C47, D50, H69, E70, C100, C103, C106, C114, and C172 each coordinate Zn(2+). NADP(+)-binding positions include G197 to G202, K226, L283 to A285, S307, and R354.

This sequence belongs to the zinc-containing alcohol dehydrogenase family. As to quaternary structure, homodimer. Zn(2+) serves as cofactor. In terms of tissue distribution, mainly expressed in roots.

The catalysed reaction is (19E)-cur-19-en-17-al + NADP(+) = norfluorocurarine + NADPH + H(+). It carries out the reaction 17,18-epoxy-17-hydroxycur-19-ene + NADP(+) = 18-hydroxynorfluorocurarine + NADPH + H(+). It functions in the pathway alkaloid biosynthesis. Its function is as follows. Alcohol dehydrogenase involved in the biosynthesis of curare monoterpene indole alkaloids (MIAs), natural products such as strychnine, a neurotoxic compound used as a pesticide to control rodents, and its pharmacologically active derivatives, including brucine, used to regulate blood pressure. Curare alkaloids act as animal glycine receptor antagonists. Catalyzes the conversion of norfluorocurarine to desoxy Wieland-Gumlich aldehyde, and of 18-OH norfluorocurarine to Wieland-Gumlich aldehyde. In Strychnos nux-vomica (Poison nut), this protein is 18-hydroxynorfluorocurarine reductase.